The chain runs to 129 residues: Translation initiation factor 5A (129 aa).

K36 carries the hypusine modification.

The protein belongs to the eIF-5A family.

It is found in the cytoplasm. Its function is as follows. Functions by promoting the formation of the first peptide bond. The protein is Translation initiation factor 5A of Picrophilus torridus (strain ATCC 700027 / DSM 9790 / JCM 10055 / NBRC 100828 / KAW 2/3).